We begin with the raw amino-acid sequence, 344 residues long: Protein RecA (344 aa).

66–73 provides a ligand contact to ATP; the sequence is GPESSGKT.

The protein belongs to the RecA family.

It is found in the cytoplasm. Can catalyze the hydrolysis of ATP in the presence of single-stranded DNA, the ATP-dependent uptake of single-stranded DNA by duplex DNA, and the ATP-dependent hybridization of homologous single-stranded DNAs. It interacts with LexA causing its activation and leading to its autocatalytic cleavage. The chain is Protein RecA from Methylobacillus flagellatus.